A 459-amino-acid chain; its full sequence is Cysteine--tRNA ligase (459 aa).

Zn(2+) is bound at residue Cys29. The 'HIGH' region signature appears at 31–41 (VTTYDYCHIGH). Zn(2+) contacts are provided by Cys210, His235, and Glu239. The short motif at 267–271 (KMSKS) is the 'KMSKS' region element. Lys270 lines the ATP pocket.

Belongs to the class-I aminoacyl-tRNA synthetase family. Monomer. The cofactor is Zn(2+).

The protein resides in the cytoplasm. The catalysed reaction is tRNA(Cys) + L-cysteine + ATP = L-cysteinyl-tRNA(Cys) + AMP + diphosphate. This is Cysteine--tRNA ligase from Idiomarina loihiensis (strain ATCC BAA-735 / DSM 15497 / L2-TR).